A 333-amino-acid polypeptide reads, in one-letter code: L-lactate dehydrogenase A chain (333 aa).

Residues 30 to 58 (GMVG…MEDK) and arginine 100 each bind NAD(+). Positions 107, 139, and 170 each coordinate substrate. Residue asparagine 139 participates in NAD(+) binding. Histidine 194 acts as the Proton acceptor in catalysis. Position 249 (threonine 249) interacts with substrate.

Belongs to the LDH/MDH superfamily. LDH family. As to quaternary structure, homotetramer.

It is found in the cytoplasm. The catalysed reaction is (S)-lactate + NAD(+) = pyruvate + NADH + H(+). Its pathway is fermentation; pyruvate fermentation to lactate; (S)-lactate from pyruvate: step 1/1. In Cyprinus carpio (Common carp), this protein is L-lactate dehydrogenase A chain (ldha).